Consider the following 457-residue polypeptide: Fibrinogen C domain-containing protein 1 (457 aa).

The interval 1–20 (MGSDRWKNIGGAPQMEDSVQ) is disordered. At 1–33 (MGSDRWKNIGGAPQMEDSVQDKSQRKGCGYILC) the chain is on the cytoplasmic side. Residues 34-54 (TVLLSVAVLLAVTVTGAVLFM) form a helical; Signal-anchor for type II membrane protein membrane-spanning segment. The Extracellular segment spans residues 55–457 (NHYHAPSTEP…MKIRPQREEN (403 aa)). A disordered region spans residues 211–235 (RPRVKADLQRAPSRSSRPRGCANGS). Residues 231–454 (CANGSKPRDC…FTEMKIRPQR (224 aa)) enclose the Fibrinogen C-terminal domain. Asparagine 233 is a glycosylation site (N-linked (GlcNAc...) asparagine). Cysteine 240 and cysteine 269 form a disulfide bridge. N-linked (GlcNAc...) asparagine glycosylation occurs at asparagine 336. 2 residues coordinate Ca(2+): aspartate 389 and aspartate 391. Cysteine 397 and cysteine 410 are joined by a disulfide.

As to quaternary structure, homotetramer; disulfide-linked.

The protein resides in the membrane. Its function is as follows. Acetyl group-binding receptor which shows a calcium-dependent binding to acetylated structures such as chitin, some N-acetylated carbohydrates, and amino acids. The chain is Fibrinogen C domain-containing protein 1 (fibcd1) from Xenopus tropicalis (Western clawed frog).